Here is a 185-residue protein sequence, read N- to C-terminus: Ribosome-recycling factor (185 aa).

The protein belongs to the RRF family.

The protein resides in the cytoplasm. Responsible for the release of ribosomes from messenger RNA at the termination of protein biosynthesis. May increase the efficiency of translation by recycling ribosomes from one round of translation to another. The polypeptide is Ribosome-recycling factor (Methylobacillus flagellatus (strain ATCC 51484 / DSM 6875 / VKM B-1610 / KT)).